The sequence spans 427 residues: Probable purple acid phosphatase 20 (427 aa).

Residues 1 to 21 (MVKVLGLVAILLIVLAGNVLS) form the signal peptide. N-linked (GlcNAc...) asparagine glycosylation occurs at Asn85. Residues Asp147, Asp174, and Tyr177 each coordinate Fe cation. Asp174 serves as a coordination point for Zn(2+). The Zn(2+) site is built by Asn207 and His291. Asn207 is a binding site for substrate. His301 serves as the catalytic Proton donor. His330 is a Zn(2+) binding site. Residue 330–332 (HVH) coordinates substrate. Fe cation is bound at residue His332. An N-linked (GlcNAc...) asparagine glycan is attached at Asn392.

It belongs to the metallophosphoesterase superfamily. Purple acid phosphatase family. Homodimer. Requires Fe cation as cofactor. Zn(2+) is required as a cofactor. Expressed flowers and siliques.

The protein localises to the secreted. It catalyses the reaction a phosphate monoester + H2O = an alcohol + phosphate. This is Probable purple acid phosphatase 20 (PAP20) from Arabidopsis thaliana (Mouse-ear cress).